A 419-amino-acid polypeptide reads, in one-letter code: Serine hydroxymethyltransferase (419 aa).

Residues Leu121 and 125–127 each bind (6S)-5,6,7,8-tetrahydrofolate; that span reads GHL. Lys230 carries the post-translational modification N6-(pyridoxal phosphate)lysine.

Belongs to the SHMT family. Homodimer. It depends on pyridoxal 5'-phosphate as a cofactor.

It localises to the cytoplasm. The enzyme catalyses (6R)-5,10-methylene-5,6,7,8-tetrahydrofolate + glycine + H2O = (6S)-5,6,7,8-tetrahydrofolate + L-serine. It participates in one-carbon metabolism; tetrahydrofolate interconversion. The protein operates within amino-acid biosynthesis; glycine biosynthesis; glycine from L-serine: step 1/1. In terms of biological role, catalyzes the reversible interconversion of serine and glycine with tetrahydrofolate (THF) serving as the one-carbon carrier. This reaction serves as the major source of one-carbon groups required for the biosynthesis of purines, thymidylate, methionine, and other important biomolecules. Also exhibits THF-independent aldolase activity toward beta-hydroxyamino acids, producing glycine and aldehydes, via a retro-aldol mechanism. The protein is Serine hydroxymethyltransferase of Vesicomyosocius okutanii subsp. Calyptogena okutanii (strain HA).